Consider the following 307-residue polypeptide: Thioredoxin-related transmembrane protein 2-B (307 aa).

The signal sequence occupies residues Met-1–Lys-19. Residues Trp-20–Arg-111 are Extracellular-facing. Residues Leu-112–Tyr-132 traverse the membrane as a helical segment. Positions Tyr-132–Lys-269 constitute a Thioredoxin domain. Residues Met-133–Lys-307 are Cytoplasmic-facing. A disordered region spans residues Gly-268–Lys-307. Over residues Lys-269–Ser-278 the composition is skewed to basic and acidic residues. Residues Lys-304–Lys-307 carry the Di-lysine motif motif.

As to quaternary structure, monomer. Homodimer; disulfide-linked. Occurs in both reduced and oxidized monomeric form. Oxidative conditions increase homodimerization.

It localises to the endoplasmic reticulum membrane. The protein resides in the mitochondrion membrane. Its function is as follows. Endoplasmic reticulum and mitochondria-associated protein that probably functions as a regulator of cellular redox state and thereby regulates protein post-translational modification, protein folding and mitochondrial activity. The polypeptide is Thioredoxin-related transmembrane protein 2-B (tmx2b) (Danio rerio (Zebrafish)).